A 330-amino-acid chain; its full sequence is DNA-directed RNA polymerase subunit alpha (330 aa).

The tract at residues 1–231 is alpha N-terminal domain (alpha-NTD); sequence MQTNLLKPKT…EQLAVFAQLE (231 aa). The segment at 250–330 is alpha C-terminal domain (alpha-CTD); that stretch reads FDPILLRPVD…SWPPAGLDKR (81 aa).

It belongs to the RNA polymerase alpha chain family. Homodimer. The RNAP catalytic core consists of 2 alpha, 1 beta, 1 beta' and 1 omega subunit. When a sigma factor is associated with the core the holoenzyme is formed, which can initiate transcription.

It carries out the reaction RNA(n) + a ribonucleoside 5'-triphosphate = RNA(n+1) + diphosphate. Functionally, DNA-dependent RNA polymerase catalyzes the transcription of DNA into RNA using the four ribonucleoside triphosphates as substrates. This chain is DNA-directed RNA polymerase subunit alpha, found in Polaromonas naphthalenivorans (strain CJ2).